The following is a 390-amino-acid chain: Succinate--CoA ligase [ADP-forming] subunit beta (390 aa).

The 237-residue stretch at K9–K245 folds into the ATP-grasp domain. ATP contacts are provided by residues K46, G53 to G55, E100, Y103, and E108. The Mg(2+) site is built by N200 and D214. Residues N265 and G322–V324 contribute to the substrate site.

It belongs to the succinate/malate CoA ligase beta subunit family. In terms of assembly, heterotetramer of two alpha and two beta subunits. It depends on Mg(2+) as a cofactor.

The enzyme catalyses succinate + ATP + CoA = succinyl-CoA + ADP + phosphate. It carries out the reaction GTP + succinate + CoA = succinyl-CoA + GDP + phosphate. The protein operates within carbohydrate metabolism; tricarboxylic acid cycle; succinate from succinyl-CoA (ligase route): step 1/1. Its function is as follows. Succinyl-CoA synthetase functions in the citric acid cycle (TCA), coupling the hydrolysis of succinyl-CoA to the synthesis of either ATP or GTP and thus represents the only step of substrate-level phosphorylation in the TCA. The beta subunit provides nucleotide specificity of the enzyme and binds the substrate succinate, while the binding sites for coenzyme A and phosphate are found in the alpha subunit. This Chromobacterium violaceum (strain ATCC 12472 / DSM 30191 / JCM 1249 / CCUG 213 / NBRC 12614 / NCIMB 9131 / NCTC 9757 / MK) protein is Succinate--CoA ligase [ADP-forming] subunit beta.